A 357-amino-acid polypeptide reads, in one-letter code: Protein FAM118A (357 aa).

N-acetylmethionine is present on Met-1. A helical transmembrane segment spans residues 30 to 46 (LLLVIGTGVSAAVAPGI). Ser-311 bears the Phosphoserine mark.

This sequence belongs to the FAM118 family.

The protein resides in the membrane. The chain is Protein FAM118A (Fam118a) from Mus musculus (Mouse).